The primary structure comprises 410 residues: Peptidase T (410 aa).

Position 79 (His-79) interacts with Zn(2+). Asp-81 is an active-site residue. Position 142 (Asp-142) interacts with Zn(2+). Residue Glu-176 is the Proton acceptor of the active site. Residues Glu-177, Asp-199, and His-381 each coordinate Zn(2+).

This sequence belongs to the peptidase M20B family. Requires Zn(2+) as cofactor.

It localises to the cytoplasm. The enzyme catalyses Release of the N-terminal residue from a tripeptide.. In terms of biological role, cleaves the N-terminal amino acid of tripeptides. The chain is Peptidase T (pepT) from Bacillus subtilis (strain 168).